We begin with the raw amino-acid sequence, 508 residues long: Anthranilate synthase component 1 (508 aa).

Residues Ser49 and 282 to 284 contribute to the L-tryptophan site; that span reads PYM. Residue 317-318 coordinates chorismate; that stretch reads GT. Glu344 lines the Mg(2+) pocket. Residues Tyr432, Arg452, 466–468, and Gly468 each bind chorismate; that span reads GAG. Glu481 serves as a coordination point for Mg(2+).

This sequence belongs to the anthranilate synthase component I family. Heterotetramer consisting of two non-identical subunits: a beta subunit (TrpG) and a large alpha subunit (TrpE). Mg(2+) serves as cofactor.

It carries out the reaction chorismate + L-glutamine = anthranilate + pyruvate + L-glutamate + H(+). Its pathway is amino-acid biosynthesis; L-tryptophan biosynthesis; L-tryptophan from chorismate: step 1/5. With respect to regulation, feedback inhibited by tryptophan. In terms of biological role, part of a heterotetrameric complex that catalyzes the two-step biosynthesis of anthranilate, an intermediate in the biosynthesis of L-tryptophan. In the first step, the glutamine-binding beta subunit (TrpG) of anthranilate synthase (AS) provides the glutamine amidotransferase activity which generates ammonia as a substrate that, along with chorismate, is used in the second step, catalyzed by the large alpha subunit of AS (TrpE) to produce anthranilate. In the absence of TrpG, TrpE can synthesize anthranilate directly from chorismate and high concentrations of ammonia. The polypeptide is Anthranilate synthase component 1 (trpE) (Geobacillus stearothermophilus (Bacillus stearothermophilus)).